A 214-amino-acid polypeptide reads, in one-letter code: Cytochrome b (214 aa).

Helical transmembrane passes span 31–51, 75–96, 111–131, and 176–196; these read FGSMLLACLMIQTVTGFFLAI, WIMQNTHAIGASMFFMCIYTHI, WLSGTTLLIVLMRTAFFGYVL, and FFALHFILPFIIISLSSIHII. Positions 81 and 95 each coordinate heme b. Heme b-binding residues include His-180 and His-194. An a ubiquinone-binding site is contributed by His-199.

It belongs to the cytochrome b family. In terms of assembly, the cytochrome bc1 complex contains 3 respiratory subunits (MT-CYB, CYC1 and UQCRFS1), 2 core proteins (UQCRC1 and UQCRC2) and probably 6 low-molecular weight proteins. Heme b is required as a cofactor.

It localises to the mitochondrion inner membrane. Its function is as follows. Component of the ubiquinol-cytochrome c reductase complex (complex III or cytochrome b-c1 complex) that is part of the mitochondrial respiratory chain. The b-c1 complex mediates electron transfer from ubiquinol to cytochrome c. Contributes to the generation of a proton gradient across the mitochondrial membrane that is then used for ATP synthesis. The chain is Cytochrome b (MT-CYB) from Cerastes cerastes (Horned desert viper).